Consider the following 674-residue polypeptide: MPRRRGSSSSSSAAGGSGGGGGFGFSSLRRELHLHNFFRTSSPSASSTSRTPPAALPPRTSAVTIPGSNHKLTSSASSYHPPRELTVSTFSAGSATAADGLGGAHLTPSLSSSVHARRESFLYRASDDLREASSLRPVSRASSIASNEHGHGDDLIVTPFAQLLASLRNVRSNLISITNIQNSDDSRHANRSAKRPPLHNIELPDDVVHCAHDTLEELDWCLDQLETIQTHRSVSEMASSKFRKMLNKELSHFAESSKSGTQVSKFLITTYMDKEEDEPSIEIEVPTEVQGPSTSGPMTLSILKKAQTAAMNKISGVRKLRAPSHDGHVPEYGVNCAREIAVHMQRLDDWGPDVFKIDELSKNHSLTVVTFSLLRQRNLFKTFEIHQSTLVTYLLNLEHHYRNNHYHNFIHAADVAQSMHVLLMSPVLTEVFTDLEVLAAIFAGAVHDVDHPGFTNQYLINSNNELAIMYNDESVLEQHHLAVAFKLLQDSNCDFLANLSRKQRLQFRKIVIDMVLATDMSKHMSLLADLKTMVEAKKVAGNNVIVLDKYNDKIQVLQSMIHLADLSNPTKPIELYQQWNQRIMEEYWRQGDKEKELGLEISPMCDRGNVTIEKSQVGFIDYIVHPLYETWADLVYPDAQNILDQLEENREWYQSRIPEEPDTARTVTEDDEHK.

The disordered stretch occupies residues 1–82; sequence MPRRRGSSSS…TSSASSYHPP (82 aa). Gly residues predominate over residues 15 to 24; the sequence is GGSGGGGGFG. The segment covering 39-62 has biased composition (low complexity); sequence RTSSPSASSTSRTPPAALPPRTSA. Residues 66 to 78 show a composition bias toward polar residues; the sequence is PGSNHKLTSSASS. A PDEase domain is found at 328–660; it reads HVPEYGVNCA…EWYQSRIPEE (333 aa). Histidine 407 (proton donor) is an active-site residue. Histidine 411, histidine 447, aspartate 448, and aspartate 565 together coordinate a divalent metal cation.

It belongs to the cyclic nucleotide phosphodiesterase family. Requires a divalent metal cation as cofactor. In terms of tissue distribution, expressed in dorsal D (DD) motor neurons and several other neurons at the L1 stage. Expression in DD neurons decreases gradually beginning in the late L1 stage. Highly expressed in adult ventral D (VD) motor neurons, but diminished in adult DD motor neurons.

It catalyses the reaction 3',5'-cyclic AMP + H2O = AMP + H(+). In terms of biological role, hydrolyzes the second messenger 3',5'-cyclic AMP (cAMP), which is a key regulator of many important physiological processes. Antagonizes dorsal D (DD) motor neuron respecification by reducing levels of cAMP. This is Probable 3',5'-cyclic-AMP phosphodiesterase pde-4 (pde-4) from Caenorhabditis elegans.